The chain runs to 142 residues: Large ribosomal subunit protein uL13 (142 aa).

The protein belongs to the universal ribosomal protein uL13 family. Part of the 50S ribosomal subunit.

This protein is one of the early assembly proteins of the 50S ribosomal subunit, although it is not seen to bind rRNA by itself. It is important during the early stages of 50S assembly. The protein is Large ribosomal subunit protein uL13 of Alkaliphilus metalliredigens (strain QYMF).